The chain runs to 62 residues: Alpha-lytic protease L1 (62 aa).

Ser-48 acts as the Charge relay system in catalysis.

It belongs to the peptidase S1 family. Monomer.

The protein resides in the secreted. It catalyses the reaction Preferential cleavage: Ala-|-Xaa, Val-|-Xaa in bacterial cell walls, elastin and other proteins.. Its activity is regulated as follows. Inhibited by phenylmethanesulfonyl fluoride (PMSF) and p-chloromercuribenzoate (PCMB). In terms of biological role, has bacteriolytic activity. The sequence is that of Alpha-lytic protease L1 from Lysobacter sp. (strain XL1).